The sequence spans 82 residues: Small ribosomal subunit protein bS16 (82 aa).

The protein belongs to the bacterial ribosomal protein bS16 family.

The chain is Small ribosomal subunit protein bS16 from Deinococcus geothermalis (strain DSM 11300 / CIP 105573 / AG-3a).